Here is a 147-residue protein sequence, read N- to C-terminus: Nucleoside diphosphate kinase (147 aa).

The ATP site is built by K11, F59, R87, T93, R104, and N114. Catalysis depends on H117, which acts as the Pros-phosphohistidine intermediate.

It belongs to the NDK family. As to quaternary structure, homotetramer. Requires Mg(2+) as cofactor.

The protein localises to the cytoplasm. It catalyses the reaction a 2'-deoxyribonucleoside 5'-diphosphate + ATP = a 2'-deoxyribonucleoside 5'-triphosphate + ADP. The catalysed reaction is a ribonucleoside 5'-diphosphate + ATP = a ribonucleoside 5'-triphosphate + ADP. Its function is as follows. Major role in the synthesis of nucleoside triphosphates other than ATP. The ATP gamma phosphate is transferred to the NDP beta phosphate via a ping-pong mechanism, using a phosphorylated active-site intermediate. This is Nucleoside diphosphate kinase from Anaeromyxobacter dehalogenans (strain 2CP-1 / ATCC BAA-258).